The following is a 421-amino-acid chain: Prenyltransferase asqH2 (421 aa).

Residues 1-28 form a disordered region; that stretch reads MDRNSFTAYGPATGAITESGEQENDHTK. Glutamate 105 contacts L-tryptophan. The substrate site is built by arginine 119, arginine 272, lysine 274, tyrosine 276, and tyrosine 341.

It belongs to the tryptophan dimethylallyltransferase family.

It carries out the reaction yaequinolone E + dimethylallyl diphosphate + H2O = [(1'E)-3'-hydroxy-3',7'-dimethylocta-1',6'-dien-1'-yl]-quinolinone B + diphosphate. The protein operates within secondary metabolite biosynthesis. It functions in the pathway alkaloid biosynthesis. It participates in mycotoxin biosynthesis. In terms of biological role, prenyltransferase; part of the gene cluster that mediates the biosynthesis of the aspoquinolone mycotoxins. Within the pathway, the prenyltransferase asqH2 performs the second alkylation with DMAPP at delta(3') double bond to yield a carbenium ion intermediate, which can be attacked by H(2)O to yield a styrenyl quinolone containing a C3'-hydroxyprenyl chain. The first step of the pathway is catalyzed by the nonribosomal peptide synthetase asqK that condenses anthranilic acid and O-methyl-L-tyrosine to produce 4'-methoxycyclopeptin. 4'-methoxycyclopeptin is then converted to 4'-methoxydehydrocyclopeptin by the ketoglutarate-dependent dioxygenase asqJ. AsqJ also converts its first product 4'-methoxydehydrocyclopeptin to 4'-methoxycyclopenin. The following conversion of 4'-methoxycyclopenin into 4'-methoxyviridicatin is catalyzed by the cyclopenase asqI. 4'-methoxyviridicatin is the precursor of quinolone natural products, and is further converted to quinolinone B. The prenyltransferase asqH1 then catalyzes the canonical Friedel-Crafts alkylation of quinolinone B with dimethylallyl cation to yield dimethylallyl quinolone, which is subjected to FAD-dependent dehydrogenation by the FAD-linked oxidoreductase asqF to yield conjugated aryl diene. The delta(3') double bond then serves as the site of the second alkylation with DMAPP catalyzed by the prenyltransferase asqH2 to yield a carbenium ion intermediate, which can be attacked by H(2)O to yield a styrenyl quinolone containing a C3'-hydroxyprenyl chain. The FAD-dependent monooxygenase asqG performs epoxidation of the terminal C7'-C8' olefin. Finally, after dehydratation of the epoxide at C3 by asqC, the quinolone epoxide rearrangement protein asqO catalyzes an enzymatic 3-exo-tet cyclization to yield the cyclopropyl-THF ring system in aspoquinolone. In Emericella nidulans (strain FGSC A4 / ATCC 38163 / CBS 112.46 / NRRL 194 / M139) (Aspergillus nidulans), this protein is Prenyltransferase asqH2.